A 962-amino-acid polypeptide reads, in one-letter code: Leucine--tRNA ligase (962 aa).

The short motif at 40–51 (PYPSGAGLHVGH) is the 'HIGH' region element. Positions 548-570 (SRKLSGQHDEPNSNVTPSAVEGS) are disordered. Positions 737 to 741 (KMSKS) match the 'KMSKS' region motif. Residue K740 participates in ATP binding.

The protein belongs to the class-I aminoacyl-tRNA synthetase family.

The protein resides in the cytoplasm. It catalyses the reaction tRNA(Leu) + L-leucine + ATP = L-leucyl-tRNA(Leu) + AMP + diphosphate. This is Leucine--tRNA ligase from Christiangramia forsetii (strain DSM 17595 / CGMCC 1.15422 / KT0803) (Gramella forsetii).